Consider the following 1026-residue polypeptide: Multidrug resistance protein MdtC (1026 aa).

The next 11 helical transmembrane spans lie at 15–35 (ILIAAAITLCGILGFRLLPVA), 333–353 (EVEETLAISVALVILVVFLFL), 360–380 (LIPAVAVPVSLIGTFAAMYLC), 387–407 (LSLMALTIATGFVVDDAIVVL), 431–451 (VGFTVISMSLSLVAVFLPLLL), 463–483 (FAVTLSVAIGISLVVSLTLTP), 528–548 (LVGVVFLGTVALNIWLYIAIP), 853–873 (LILIVAAIATVYIVLGILYES), 897–917 (LFNAPFSLIALIGIMLLIGIV), 953–973 (PIMMTTLAALFGALPLVLSDG), and 984–1004 (ITIVGGLVMSQLLTLYTTPVV).

Belongs to the resistance-nodulation-cell division (RND) (TC 2.A.6) family. MdtC subfamily. In terms of assembly, part of a tripartite efflux system composed of MdtA, MdtB and MdtC. MdtC forms a heteromultimer with MdtB.

Its subcellular location is the cell inner membrane. The sequence is that of Multidrug resistance protein MdtC from Salmonella heidelberg (strain SL476).